Here is a 793-residue protein sequence, read N- to C-terminus: DnaJ homolog subfamily C member 10 (793 aa).

The signal sequence occupies residues 1-32 (MGVWLNKDDFIRDLKRISLCLLILYVVVVVGT). Residues 35 to 100 (NFYSLLGVSK…DLRKKYDKYG (66 aa)) form the J domain. One can recognise a Thioredoxin 1 domain in the interval 130–232 (EIITLERREF…ESLVAFAMQH (103 aa)). C158 and C161 form a disulfide bridge. Trxb regions lie at residues 235–350 (STVT…LPDF) and 348–463 (PDFE…PQNF). 3 consecutive Thioredoxin domains span residues 454–553 (HVTT…IEDL), 557–665 (SVVS…SWGL), and 671–776 (ASID…ALIY). C480 and C483 form a disulfide bridge. N-linked (GlcNAc...) asparagine glycosylation occurs at N530. Disulfide bonds link C588/C591 and C700/C703. Positions 790 to 793 (KDEL) match the Prevents secretion from ER motif.

As to quaternary structure, interacts with HSPA5 (via its J domain). Interacts with EDEM1. In terms of tissue distribution, ubiquitous. Particularly abundant in secretory tissues. Ubiquitous in fetal tissues and tumor tissues. Higher expression in fetal tissues than in adult tissues. Expressed in testis, pancreas, fetal thymus and fetal kidney. High expression in heart, liver, kidney, and testis. Low expression in spleen and skeletal muscle.

It localises to the endoplasmic reticulum lumen. Endoplasmic reticulum disulfide reductase involved both in the correct folding of proteins and degradation of misfolded proteins. Required for efficient folding of proteins in the endoplasmic reticulum by catalyzing the removal of non-native disulfide bonds formed during the folding of proteins, such as LDLR. Also involved in endoplasmic reticulum-associated degradation (ERAD) by reducing incorrect disulfide bonds in misfolded glycoproteins recognized by EDEM1. Interaction with HSPA5 is required its activity, not for the disulfide reductase activity, but to facilitate the release of DNAJC10 from its substrate. Promotes apoptotic signaling pathway in response to endoplasmic reticulum stress. The polypeptide is DnaJ homolog subfamily C member 10 (Dnajc10) (Mus musculus (Mouse)).